A 142-amino-acid polypeptide reads, in one-letter code: Large ribosomal subunit protein uL16 (142 aa).

This sequence belongs to the universal ribosomal protein uL16 family. As to quaternary structure, part of the 50S ribosomal subunit.

In terms of biological role, binds 23S rRNA and is also seen to make contacts with the A and possibly P site tRNAs. The polypeptide is Large ribosomal subunit protein uL16 (Aquifex aeolicus (strain VF5)).